Reading from the N-terminus, the 378-residue chain is Spermidine/putrescine import ATP-binding protein PotA (378 aa).

Residues 18 to 248 (VQLAGIRKCF…PKNLFVAGFI (231 aa)) form the ABC transporter domain. 50–57 (GPSGCGKT) contributes to the ATP binding site.

It belongs to the ABC transporter superfamily. Spermidine/putrescine importer (TC 3.A.1.11.1) family. In terms of assembly, the complex is composed of two ATP-binding proteins (PotA), two transmembrane proteins (PotB and PotC) and a solute-binding protein (PotD).

The protein localises to the cell inner membrane. It carries out the reaction ATP + H2O + polyamine-[polyamine-binding protein]Side 1 = ADP + phosphate + polyamineSide 2 + [polyamine-binding protein]Side 1.. Part of the ABC transporter complex PotABCD involved in spermidine/putrescine import. Responsible for energy coupling to the transport system. This is Spermidine/putrescine import ATP-binding protein PotA from Shigella dysenteriae serotype 1 (strain Sd197).